The following is a 305-amino-acid chain: Oxygen-dependent coproporphyrinogen-III oxidase (305 aa).

Substrate is bound at residue serine 98. Residues histidine 102 and histidine 112 each coordinate a divalent metal cation. The active-site Proton donor is histidine 112. 114–116 (NVR) is a binding site for substrate. Positions 151 and 181 each coordinate a divalent metal cation. Residues 246 to 281 (YVEFNLVYDRGTLFGLQSGGRTESILMSMPPLARWE) form an important for dimerization region. 264–266 (GGR) contacts substrate.

It belongs to the aerobic coproporphyrinogen-III oxidase family. As to quaternary structure, homodimer. A divalent metal cation serves as cofactor.

It is found in the cytoplasm. It catalyses the reaction coproporphyrinogen III + O2 + 2 H(+) = protoporphyrinogen IX + 2 CO2 + 2 H2O. The protein operates within porphyrin-containing compound metabolism; protoporphyrin-IX biosynthesis; protoporphyrinogen-IX from coproporphyrinogen-III (O2 route): step 1/1. Its function is as follows. Involved in the heme biosynthesis. Catalyzes the aerobic oxidative decarboxylation of propionate groups of rings A and B of coproporphyrinogen-III to yield the vinyl groups in protoporphyrinogen-IX. This Vibrio atlanticus (strain LGP32) (Vibrio splendidus (strain Mel32)) protein is Oxygen-dependent coproporphyrinogen-III oxidase.